The following is a 313-amino-acid chain: Guanine nucleotide-binding protein-like 3-like protein (313 aa).

Residues 1 to 14 (MGIKKKRQSKRLTT) show a composition bias toward basic residues. Residues 1–41 (MGIKKKRQSKRLTTRKREGMLKRARANERKKRRMDRKMQAK) are disordered. Residues 15-27 (RKREGMLKRARAN) are compositionally biased toward basic and acidic residues. GTP contacts are provided by residues 95–98 (SKSD), 178–185 (GNPGSGKN), and 212–215 (TLSS).

The protein belongs to the MMR1/HSR1 GTP-binding protein family.

The protein resides in the nucleus. Its subcellular location is the nucleolus. Functionally, required for normal processing of ribosomal pre-rRNA. Required for cell proliferation. Binds GTP. The chain is Guanine nucleotide-binding protein-like 3-like protein from Encephalitozoon cuniculi (strain GB-M1) (Microsporidian parasite).